We begin with the raw amino-acid sequence, 36 residues long: APMEPVYPGDNATPEQMAQYAAELRRYINMLTRPRY.

A Tyrosine amide modification is found at Tyr-36.

This sequence belongs to the NPY family.

It localises to the secreted. In terms of biological role, hormone secreted by pancreatic cells that acts as a regulator of pancreatic and gastrointestinal functions probably by signaling through the G protein-coupled receptor NPY4R2. The chain is Pancreatic polypeptide (PPY) from Equus przewalskii (Przewalski's horse).